Here is a 93-residue protein sequence, read N- to C-terminus: Cell division protein CrgA (93 aa).

2 helical membrane-spanning segments follow: residues 31 to 51 and 70 to 90; these read VWFV…LMVF and LGPW…LLTM.

Belongs to the CrgA family.

Its subcellular location is the cell membrane. In terms of biological role, involved in cell division. The protein is Cell division protein CrgA of Mycobacterium avium (strain 104).